We begin with the raw amino-acid sequence, 873 residues long: MRFGWLEVAALTAASVANAQVFDNSHGNNQELAFSPPFYPSPWADGQGEWADAHRRAVEIVSQMTLAEKVNLTTGTGWEMDRCVGQTGSVPRLGINWGLCGQDSPLGIRFSDLNSAFPAGTNVAATWDKTLAYLRGKAMGEEFNDKGVDILLGPAAGPLGKYPDGGRIWEGFSPDPALTGVLFAETIKGIQDAGVIATAKHYILNEQEHFRQVGEAQGYGYNITETISSNVDDKTMHELYLWPFADAVRAGVGAVMCSYNQINNSYGCQNSQTLNKLLKAELGFQGFVMSDWSAHHSGVGAALAGLDMSMPGDISFDDGLSFWGTNLTVSVLNGTVPAWRVDDMAVRIMTAYYKVGRDRLRIPPNFSSWTRDEYGWEHSAVSEGAWTKVNDFVNVQRSHSQIIREIGAASTVLLKNTGALPLTGKEVKVGVLGEDAGSNPWGANGCPDRGCDNGTLAMAWGSGTANFPYLVTPEQAIQREVISNGGNVFAVTDNGALSQMADVASQSSVSLVFVNADSGEGFISVDGNEGDRKNLTLWKNGEAVIDTVVSHCNNTIVVIHSVGPVLIDRWYDNPNVTAIIWAGLPGQESGNSLVDVLYGRVNPSAKTPFTWGKTRESYGAPLLTEPNNGNGAPQDDFNEGVFIDYRHFDKRNETPIYEFGHGLSYTTFGYSHLRVQALNSSSSAYVPTSGETKPAPTYGEIGSAADYLYPEGLKRITKFIYPWLNSTDLEDSSDDPNYGWEDSEYIPEGARDGSPQPLLKAGGAPGGNPTLYQDLVRVSATITNTGNVAGYEVPQLYVSLGGPNEPRVVLRKFDRIFLAPGEQKVWTTTLNRRDLANWDVEAQDWVITKYPKKVHVGSSSRKLPLRAPLPRVY.

The signal sequence occupies residues 1–19; the sequence is MRFGWLEVAALTAASVANA. 3 N-linked (GlcNAc...) asparagine glycosylation sites follow: Asn71, Asn222, and Asn263. Asp291 is an active-site residue. N-linked (GlcNAc...) asparagine glycosylation is found at Asn326, Asn333, Asn365, Asn453, Asn534, Asn553, Asn575, Asn679, and Asn725. The tract at residues 731-764 is disordered; sequence DSSDDPNYGWEDSEYIPEGARDGSPQPLLKAGGA.

The protein belongs to the glycosyl hydrolase 3 family.

The protein resides in the secreted. The enzyme catalyses Hydrolysis of terminal, non-reducing beta-D-glucosyl residues with release of beta-D-glucose.. It functions in the pathway glycan metabolism; cellulose degradation. Functionally, beta-glucosidases are one of a number of cellulolytic enzymes involved in the degradation of cellulosic biomass. Catalyzes the last step releasing glucose from the inhibitory cellobiose. This chain is Probable beta-glucosidase A (bglA), found in Aspergillus fumigatus (strain CBS 144.89 / FGSC A1163 / CEA10) (Neosartorya fumigata).